The following is a 236-amino-acid chain: Putative glutamine amidotransferase-like protein YvdE (236 aa).

The 220-residue stretch at 17–236 (SPFWWNKVSY…IFEIFANGTI (220 aa)) folds into the Glutamine amidotransferase type-1 domain.

This Lactococcus lactis subsp. lactis (strain IL1403) (Streptococcus lactis) protein is Putative glutamine amidotransferase-like protein YvdE (yvdE).